We begin with the raw amino-acid sequence, 541 residues long: MESQRNILLIGLLFVSFLLWQQWQADKAPKPVATESSVVANATTNHSADVPEADTGVPAAMTATQNLITVKTDQLDVQINPVGGDIVFAALVSHKLEQGKDQPFVLLEQTKDFTYIAQSGLIGRDGIDSSAKGRAAFAASKTEFTLADGQDTLEVPLTYVADNGVTYTKVFVFHRGKFNVDIDYKINNTSAAPLQVQMYGQIKQTIKPSESSMMMPTYRGAAFSTQDVRYEKYKFEDMSKSNLNQPTLGGWAAMLQHYFVSAWIPPATDSNTIFSSVSAGGLANIGFRGAVYDIAPGATQEISSQFYVGPKDQKALSALSDTLNLVVDYGFLWWLAVPIHWLLMFYQSFVGNWGVAIILITLTVRGLLFPLTKAQYTSMAKMRNLQPKLQDLKERFGDDRQKMGQAMMELYKKEKVNPMGGCLPILLQMPIFIALYWVLLESFELRHAPFMLWIHDLSVQDPYYILPLLMGVSMFVMQKMQPIAPTMDPMQVKMMQWMPVIFTVFFLWFPSGLVLYWLVGNIVAIIQQKIIYAGLEKKGLK.

5 helical membrane-spanning segments follow: residues 6–26, 349–369, 420–440, 457–477, and 500–520; these read NILLIGLLFVSFLLWQQWQAD, FVGNWGVAIILITLTVRGLLF, GGCLPILLQMPIFIALYWVLL, LSVQDPYYILPLLMGVSMFVM, and VIFTVFFLWFPSGLVLYWLVG.

Belongs to the OXA1/ALB3/YidC family. Type 1 subfamily. Interacts with the Sec translocase complex via SecD. Specifically interacts with transmembrane segments of nascent integral membrane proteins during membrane integration.

It is found in the cell inner membrane. Its function is as follows. Required for the insertion and/or proper folding and/or complex formation of integral membrane proteins into the membrane. Involved in integration of membrane proteins that insert both dependently and independently of the Sec translocase complex, as well as at least some lipoproteins. Aids folding of multispanning membrane proteins. The polypeptide is Membrane protein insertase YidC (Shewanella sp. (strain MR-7)).